A 1453-amino-acid chain; its full sequence is NRPS-like tryptophan epimerase fscC (1453 aa).

The interval 37–433 is adenylation; it reads SYGELSAMSS…ATHLIRNCVV (397 aa). Positions 544–626 constitute a Carrier domain; sequence TGSRQSTRHK…LFHTSKSRFT (83 aa). O-(pantetheine 4'-phosphoryl)serine is present on serine 586. Residues 639–1053 are epimerization (E) domain; it reads FPLSPVQRFF…KDVLESAGVF (415 aa). A condensation region spans residues 1181-1391; the sequence is FFGLQSNERA…AGSSLHQHNQ (211 aa).

This sequence belongs to the NRP synthetase family. Pantetheine 4'-phosphate is required as a cofactor.

It participates in secondary metabolite biosynthesis. Its function is as follows. NRPS-like tryptophan epimerase; part of the fragmented gene cluster that mediates the biosynthesis of fusarochromene, a tryptophan-derived metabolite closely related to a group of mycotoxins including fusarochromanone. Within the pathway, fscC catalyzes the first step via epimerization of L-tryptophan to provide the intermediate D-tryptophan. D-tryptophan is subsequently hydroxylated by the tryptophan 6-hydroxylase fscE to yield 6-hydroxytryptophan. The pyrrole ring undergoes cleavaged by the tryptophan 2,3-dioxygenase fscD and is finally converted to 4-hydroxykyrunenine by the hydrolase fscH. The NRPS-like oxidoreductase fscA reduces the carboxyl group to primary alcohol and the DMATS-type prenyltransferase fscG performs prenylation, followed by the formation of a chromene ring catalyzed by the oxidoreductase fscI, which leads to desacetylfusarochromene. Epoxidation by fscF and rearrangement reactions of chromene double bonds convert compound desacetylfusarochromene to fusarochromanones. Although specific acetyltransferases were not found near the fsc gene cluster, several predicted enzymes containing the N-acetyltransferase superfamily domain are present in the genome of F.equiseti. These predicted enzymes may have the potential to convert desacetylfusarochromene to fusarochromene. The polypeptide is NRPS-like tryptophan epimerase fscC (Fusarium equiseti (Fusarium scirpi)).